The chain runs to 708 residues: Vertnin (708 aa).

Disordered regions lie at residues 473–499 (PWKG…FLPP) and 561–636 (APAL…PVAE). A compositionally biased stretch (basic and acidic residues) spans 568–582 (GLREAKEKQEKEAGR).

This sequence belongs to the vertnin family.

In Ailuropoda melanoleuca (Giant panda), this protein is Vertnin (VRTN).